Here is a 483-residue protein sequence, read N- to C-terminus: NADH-quinone oxidoreductase subunit N (483 aa).

A run of 13 helical transmembrane segments spans residues 7-27, 33-53, 76-96, 108-128, 161-181, 196-216, 235-255, 272-292, 297-317, 323-343, 369-389, 402-422, and 442-462; these read AILT…LGAV, ALAS…AFYI, FAKI…QDYM, VLII…DLIA, FVLG…AYGF, GGDM…GLAF, PTPI…ALFA, IVAF…IGQT, LMAY…SAGT, AMLI…AFIL, ALAI…LGFF, GLVW…FYYI, and MGLV…LGWV.

Belongs to the complex I subunit 2 family. As to quaternary structure, NDH-1 is composed of 14 different subunits. Subunits NuoA, H, J, K, L, M, N constitute the membrane sector of the complex.

The protein resides in the cell inner membrane. It catalyses the reaction a quinone + NADH + 5 H(+)(in) = a quinol + NAD(+) + 4 H(+)(out). Functionally, NDH-1 shuttles electrons from NADH, via FMN and iron-sulfur (Fe-S) centers, to quinones in the respiratory chain. The immediate electron acceptor for the enzyme in this species is believed to be ubiquinone. Couples the redox reaction to proton translocation (for every two electrons transferred, four hydrogen ions are translocated across the cytoplasmic membrane), and thus conserves the redox energy in a proton gradient. The polypeptide is NADH-quinone oxidoreductase subunit N (Jannaschia sp. (strain CCS1)).